Reading from the N-terminus, the 412-residue chain is Argininosuccinate synthase (412 aa).

Residues 15–23 and alanine 42 contribute to the ATP site; that span reads AYSGGLDTS. L-citrulline is bound by residues tyrosine 93 and serine 98. ATP is bound at residue glycine 123. The L-aspartate site is built by threonine 125, asparagine 129, and aspartate 130. Residue asparagine 129 coordinates L-citrulline. Positions 133, 185, 194, 270, and 282 each coordinate L-citrulline.

Belongs to the argininosuccinate synthase family. Type 1 subfamily. Homotetramer.

It is found in the cytoplasm. The catalysed reaction is L-citrulline + L-aspartate + ATP = 2-(N(omega)-L-arginino)succinate + AMP + diphosphate + H(+). It participates in amino-acid biosynthesis; L-arginine biosynthesis; L-arginine from L-ornithine and carbamoyl phosphate: step 2/3. In Psychrobacter cryohalolentis (strain ATCC BAA-1226 / DSM 17306 / VKM B-2378 / K5), this protein is Argininosuccinate synthase.